A 466-amino-acid polypeptide reads, in one-letter code: Protein tilB homolog (466 aa).

4 LRR repeats span residues Ser22 to Cys43, Asp45 to Lys66, Lys67 to Glu88, and Glu89 to Lys110. One can recognise an LRRCT domain in the interval Asn123–Glu161. Residues Leu178 to Ala204 adopt a coiled-coil conformation. Basic and acidic residues-rich tracts occupy residues Glu185–Ser202 and Glu269–Ser279. Disordered regions lie at residues Glu185–Phe206 and Glu269–Pro288. Positions Val301–Lys396 constitute a CS domain. A disordered region spans residues Val418–Ile466. The segment covering Ser450–Pro460 has biased composition (acidic residues).

This sequence belongs to the tilB family. Interacts (via CS domain) with ZMYND10 (via C-terminus).

It is found in the cytoplasm. It localises to the cell projection. The protein localises to the cilium. May play a role in dynein arm assembly, hence essential for proper axoneme building for cilia motility. The protein is Protein tilB homolog (LRCC6) of Macaca fascicularis (Crab-eating macaque).